The primary structure comprises 136 residues: Holo-[acyl-carrier-protein] synthase (136 aa).

Asp-8 and Glu-62 together coordinate Mg(2+).

This sequence belongs to the P-Pant transferase superfamily. AcpS family. It depends on Mg(2+) as a cofactor.

Its subcellular location is the cytoplasm. It carries out the reaction apo-[ACP] + CoA = holo-[ACP] + adenosine 3',5'-bisphosphate + H(+). Transfers the 4'-phosphopantetheine moiety from coenzyme A to a Ser of acyl-carrier-protein. The chain is Holo-[acyl-carrier-protein] synthase from Polynucleobacter necessarius subsp. necessarius (strain STIR1).